The chain runs to 348 residues: Abnormal cell lineage protein 44 (348 aa).

The N-terminal stretch at 1-25 (MRAAPFDFFFQSTALSTFFILCSLA) is a signal peptide. 11 disulfides stabilise this stretch: Cys-91/Cys-102, Cys-141/Cys-149, Cys-151/Cys-165, Cys-213/Cys-227, Cys-215/Cys-222, Cys-272/Cys-299, Cys-282/Cys-294, Cys-298/Cys-338, Cys-314/Cys-329, Cys-316/Cys-326, and Cys-321/Cys-322. A lipid anchor (O-palmitoleoyl serine; by mom-1) is attached at Ser-219. Asn-286 carries an N-linked (GlcNAc...) asparagine glycan.

Belongs to the Wnt family. Palmitoleoylation is required for efficient binding to frizzled receptors. Depalmitoleoylation leads to Wnt signaling pathway inhibition. In terms of tissue distribution, expressed in the tail hypodermis.

Its subcellular location is the secreted. The protein resides in the extracellular space. It localises to the extracellular matrix. Ligand for members of the frizzled family of seven transmembrane receptors. Affects male tail development, vulval precursor cell specification and egg laying. Involved in morphogenesis by influencing polarity of asymmetric cell divisions of the B, U, and F cells in the male, and the T cell in males and hermaphrodites. Controls spindle orientation in B-gamma cell division during male copulatory spicule development. Involved in specification of the P7.p lineage during vulval development. Has a role in providing polarity and default lin-17 localization in axon development and positioning of neuromuscular synapses in DA9 regions by negatively regulating synaptogenesis. Plays a role in motorneuron development by promoting the extension of the anterior neurite of ventral D-type GABAergic motorneurons along the anterior-posterior axis of the ventral nerve cord. Positively regulates cilium position and dendrite morphogenesis in postembryonic PQR gas-sensing neurons. This is likely through regulating the localization of grdn-1 to the distal dendrites of PQR sensory neurons. This Caenorhabditis elegans protein is Abnormal cell lineage protein 44.